A 176-amino-acid chain; its full sequence is 3-hydroxydecanoyl-[acyl-carrier-protein] dehydratase (176 aa).

Histidine 75 is an active-site residue.

Belongs to the thioester dehydratase family. FabA subfamily. In terms of assembly, homodimer.

The protein localises to the cytoplasm. The enzyme catalyses a (3R)-hydroxyacyl-[ACP] = a (2E)-enoyl-[ACP] + H2O. It carries out the reaction (3R)-hydroxydecanoyl-[ACP] = (2E)-decenoyl-[ACP] + H2O. It catalyses the reaction (2E)-decenoyl-[ACP] = (3Z)-decenoyl-[ACP]. Its pathway is lipid metabolism; fatty acid biosynthesis. In terms of biological role, necessary for the introduction of cis unsaturation into fatty acids. Catalyzes the dehydration of (3R)-3-hydroxydecanoyl-ACP to E-(2)-decenoyl-ACP and then its isomerization to Z-(3)-decenoyl-ACP. Can catalyze the dehydratase reaction for beta-hydroxyacyl-ACPs with saturated chain lengths up to 16:0, being most active on intermediate chain length. This Glaesserella parasuis serovar 5 (strain SH0165) (Haemophilus parasuis) protein is 3-hydroxydecanoyl-[acyl-carrier-protein] dehydratase.